A 247-amino-acid polypeptide reads, in one-letter code: Protein ABHD14A (247 aa).

The chain crosses the membrane as a helical; Signal-anchor for type II membrane protein span at residues 11–31; sequence AALLGLGLLLVFLLYMGLPGP. N-linked (GlcNAc...) asparagine glycosylation is present at Asn43. Residues Ser147, Asp198, and His225 each act as charge relay system in the active site.

Belongs to the AB hydrolase superfamily. ABHD14 family. In terms of tissue distribution, widely expressed. Higher expression is detected in brain, kidney, heart, testis, ovary and uterus.

The protein resides in the cytoplasm. The protein localises to the membrane. Possible role in granule neuron development. This Mus musculus (Mouse) protein is Protein ABHD14A.